The primary structure comprises 128 residues: Large ribosomal subunit protein bL12 (128 aa).

Belongs to the bacterial ribosomal protein bL12 family. Homodimer. Part of the ribosomal stalk of the 50S ribosomal subunit. Forms a multimeric L10(L12)X complex, where L10 forms an elongated spine to which 2 to 4 L12 dimers bind in a sequential fashion. Binds GTP-bound translation factors.

Functionally, forms part of the ribosomal stalk which helps the ribosome interact with GTP-bound translation factors. Is thus essential for accurate translation. The chain is Large ribosomal subunit protein bL12 from Synechococcus sp. (strain ATCC 27144 / PCC 6301 / SAUG 1402/1) (Anacystis nidulans).